Consider the following 217-residue polypeptide: LexA repressor (217 aa).

The H-T-H motif DNA-binding region spans 26–46 (FEEMKLALDLKSKSGIHRLIK). Active-site for autocatalytic cleavage activity residues include Ser-138 and Lys-176.

The protein belongs to the peptidase S24 family. In terms of assembly, homodimer.

It catalyses the reaction Hydrolysis of Ala-|-Gly bond in repressor LexA.. In terms of biological role, represses a number of genes involved in the response to DNA damage (SOS response), including recA and lexA. In the presence of single-stranded DNA, RecA interacts with LexA causing an autocatalytic cleavage which disrupts the DNA-binding part of LexA, leading to derepression of the SOS regulon and eventually DNA repair. This Zymomonas mobilis subsp. mobilis (strain ATCC 31821 / ZM4 / CP4) protein is LexA repressor.